We begin with the raw amino-acid sequence, 466 residues long: Ribulose bisphosphate carboxylase large chain (466 aa).

At lysine 5 the chain carries N6,N6,N6-trimethyllysine. The substrate site is built by asparagine 114 and threonine 164. The Proton acceptor role is filled by lysine 166. Lysine 168 is a substrate binding site. Mg(2+) is bound by residues lysine 192, aspartate 194, and glutamate 195. An N6-carboxylysine modification is found at lysine 192. Histidine 285 acts as the Proton acceptor in catalysis. Residues arginine 286, histidine 318, and serine 370 each contribute to the substrate site.

The protein belongs to the RuBisCO large chain family. Type I subfamily. In terms of assembly, heterohexadecamer of 8 large chains and 8 small chains; disulfide-linked. The disulfide link is formed within the large subunit homodimers. It depends on Mg(2+) as a cofactor. The disulfide bond which can form in the large chain dimeric partners within the hexadecamer appears to be associated with oxidative stress and protein turnover.

The protein localises to the plastid. It is found in the chloroplast. It carries out the reaction 2 (2R)-3-phosphoglycerate + 2 H(+) = D-ribulose 1,5-bisphosphate + CO2 + H2O. The enzyme catalyses D-ribulose 1,5-bisphosphate + O2 = 2-phosphoglycolate + (2R)-3-phosphoglycerate + 2 H(+). Functionally, ruBisCO catalyzes two reactions: the carboxylation of D-ribulose 1,5-bisphosphate, the primary event in carbon dioxide fixation, as well as the oxidative fragmentation of the pentose substrate in the photorespiration process. Both reactions occur simultaneously and in competition at the same active site. The chain is Ribulose bisphosphate carboxylase large chain from Drosera capensis (Cape sundew).